Here is a 423-residue protein sequence, read N- to C-terminus: Cop9 signalosome complex subunit 12 (423 aa).

Positions 232 to 418 (GFFHLNEALL…RCIVFSKKEP (187 aa)) constitute a PCI domain.

Belongs to the CSN12 family. In terms of assembly, component of a COP9 signalosome-like (CSN) complex, composed of RRI1/CSN5, CSN9, RRI2/CSN10, PCI8/CSN11, CSN12 and CSI1. In the complex, it probably interacts directly with RRI1/CSN5, CSN9, RRI2/CSN10 and CSI1. Interacts with SEM1 and THP3.

Its subcellular location is the cytoplasm. It is found in the nucleus. Component of the COP9 signalosome (CSN) complex that acts as an regulator of the ubiquitin (Ubl) conjugation pathway by mediating the deneddylation of the cullin subunit of SCF-type E3 ubiquitin-protein ligase complexes. The CSN complex is involved in the regulation of the mating pheromone response. CSN12 forms a complex with THP3 that is recruited to transcribed genes and required for transcription elongation. This is Cop9 signalosome complex subunit 12 (CSN12) from Saccharomyces cerevisiae (strain ATCC 204508 / S288c) (Baker's yeast).